Consider the following 242-residue polypeptide: DNA repair protein RecO (242 aa).

Belongs to the RecO family. As to quaternary structure, monomer.

Functionally, involved in DNA repair and RecF pathway recombination. The sequence is that of DNA repair protein RecO from Salmonella gallinarum (strain 287/91 / NCTC 13346).